Here is a 90-residue protein sequence, read N- to C-terminus: DNA-binding protein HU-alpha (90 aa).

Belongs to the bacterial histone-like protein family. As to quaternary structure, heterodimer of an alpha and a beta chain.

Functionally, histone-like DNA-binding protein which is capable of wrapping DNA to stabilize it, and thus to prevent its denaturation under extreme environmental conditions. This chain is DNA-binding protein HU-alpha (hupA), found in Vibrio proteolyticus (Aeromonas proteolytica).